We begin with the raw amino-acid sequence, 244 residues long: Ethylene-responsive transcription factor 1 (244 aa).

The AP2/ERF DNA-binding region spans 106-164 (HYRGVRQRPWGKFAAEIRDPAKNGARVWLGTYESAEEAALAYGKAAFRMRGTKALLNFP). Positions 186 to 198 (SASSSVSSASESG) are enriched in low complexity. Positions 186–214 (SASSSVSSASESGSPKRRRKGVAAKQAEL) are disordered.

This sequence belongs to the ethylene-response factor family. Class 1 subfamily. In terms of tissue distribution, present in stems.

The protein localises to the nucleus. Functionally, involved in the regulation of gene expression during fruit ripening, by stress factors and by components of stress signal transduction pathways. Transcription factor that binds to the GCC-box pathogenesis-related promoter element. Probably acts as a transcriptional activator and may be involved in disease resistance pathways. The polypeptide is Ethylene-responsive transcription factor 1 (ERF1) (Solanum lycopersicum (Tomato)).